The chain runs to 402 residues: Flavohemoprotein (402 aa).

One can recognise a Globin domain in the interval 1–136; the sequence is MLSEKTIEIV…IADAFISIEA (136 aa). Histidine 85 lines the heme b pocket. Active-site charge relay system residues include tyrosine 95 and glutamate 135. The interval 147–402 is reductase; it reads GGWKDFRNFV…EFFGPAASLQ (256 aa). An FAD-binding FR-type domain is found at 150–260; that stretch reads KDFRNFVVVK…SAPAGDFVLN (111 aa). FAD-binding positions include tyrosine 188 and 204 to 207; that span reads RQYS. Residue 273–278 coordinates NADP(+); it reads GVGITP. 394-397 is an FAD binding site; sequence FFGP.

Belongs to the globin family. Two-domain flavohemoproteins subfamily. It in the C-terminal section; belongs to the flavoprotein pyridine nucleotide cytochrome reductase family. The cofactor is heme b. FAD is required as a cofactor.

It catalyses the reaction 2 nitric oxide + NADPH + 2 O2 = 2 nitrate + NADP(+) + H(+). The enzyme catalyses 2 nitric oxide + NADH + 2 O2 = 2 nitrate + NAD(+) + H(+). In terms of biological role, is involved in NO detoxification in an aerobic process, termed nitric oxide dioxygenase (NOD) reaction that utilizes O(2) and NAD(P)H to convert NO to nitrate, which protects the bacterium from various noxious nitrogen compounds. Therefore, plays a central role in the inducible response to nitrosative stress. This chain is Flavohemoprotein, found in Bacillus cereus (strain ATCC 10987 / NRS 248).